The sequence spans 107 residues: Ig kappa chain V-VI region TEPC 601/TEPC 191 (107 aa).

The interval 1–23 (EIVLTQSPAITAASLGQKVTITC) is framework-1. Cysteine 23 and cysteine 87 form a disulfide bridge. The interval 24–33 (SASSSVSYMH) is complementarity-determining-1. Residues 34-48 (WYQQKSGTSPKPWIY) form a framework-2 region. The interval 49 to 55 (EISKLAS) is complementarity-determining-2. Residues 56-87 (GVPARFSGSGSGTSYSLTISSMEAEDAAIYYC) form a framework-3 region. The interval 88 to 96 (QQWNYPLIT) is complementarity-determining-3. The interval 97 to 106 (FGAGTKLELK) is framework-4.

In Mus musculus (Mouse), this protein is Ig kappa chain V-VI region TEPC 601/TEPC 191.